The sequence spans 303 residues: tRNA pseudouridine synthase A (303 aa).

Asp59 acts as the Nucleophile in catalysis. Tyr128 provides a ligand contact to substrate.

It belongs to the tRNA pseudouridine synthase TruA family. Homodimer.

It catalyses the reaction uridine(38/39/40) in tRNA = pseudouridine(38/39/40) in tRNA. Functionally, formation of pseudouridine at positions 38, 39 and 40 in the anticodon stem and loop of transfer RNAs. The protein is tRNA pseudouridine synthase A of Bifidobacterium longum (strain DJO10A).